The sequence spans 86 residues: Weak toxin 2 (86 aa).

Residues 1–23 (MKTLLLTLVVVAIVCLDLGYTLT) form the signal peptide. Intrachain disulfides connect Cys24–Cys45, Cys27–Cys32, Cys38–Cys63, Cys67–Cys78, and Cys79–Cys84.

This sequence belongs to the three-finger toxin family. Ancestral subfamily. Orphan group II sub-subfamily. Expressed by the venom gland.

The protein localises to the secreted. Binds with low affinity to muscular (alpha-1-beta-1-delta-epsilon/CHRNA1-CHRNB1-CHRND-CHRNE) and very low affinity to neuronal (alpha-7/CHRNA7) nicotinic acetylcholine receptor (nAChR). This is Weak toxin 2 from Bungarus candidus (Malayan krait).